The primary structure comprises 232 residues: Large ribosomal subunit protein uL1 (232 aa).

It belongs to the universal ribosomal protein uL1 family. As to quaternary structure, part of the 50S ribosomal subunit.

Binds directly to 23S rRNA. The L1 stalk is quite mobile in the ribosome, and is involved in E site tRNA release. Its function is as follows. Protein L1 is also a translational repressor protein, it controls the translation of the L11 operon by binding to its mRNA. This is Large ribosomal subunit protein uL1 from Dinoroseobacter shibae (strain DSM 16493 / NCIMB 14021 / DFL 12).